Here is a 272-residue protein sequence, read N- to C-terminus: Glutamate 5-kinase (272 aa).

Lysine 14 serves as a coordination point for ATP. Positions 54, 141, and 157 each coordinate substrate. ATP-binding positions include 177 to 178 (SD) and 219 to 225 (TGGMLSK).

Belongs to the glutamate 5-kinase family.

The protein localises to the cytoplasm. The enzyme catalyses L-glutamate + ATP = L-glutamyl 5-phosphate + ADP. It participates in amino-acid biosynthesis; L-proline biosynthesis; L-glutamate 5-semialdehyde from L-glutamate: step 1/2. Functionally, catalyzes the transfer of a phosphate group to glutamate to form L-glutamate 5-phosphate. The sequence is that of Glutamate 5-kinase from Streptococcus pyogenes serotype M28 (strain MGAS6180).